Here is a 571-residue protein sequence, read N- to C-terminus: Sulfite reductase [NADPH] hemoprotein beta-component (571 aa).

Cys-435, Cys-441, Cys-480, and Cys-484 together coordinate [4Fe-4S] cluster. Cys-484 provides a ligand contact to siroheme.

This sequence belongs to the nitrite and sulfite reductase 4Fe-4S domain family. In terms of assembly, alpha(8)-beta(8). The alpha component is a flavoprotein, the beta component is a hemoprotein. Requires siroheme as cofactor. The cofactor is [4Fe-4S] cluster.

It catalyses the reaction hydrogen sulfide + 3 NADP(+) + 3 H2O = sulfite + 3 NADPH + 4 H(+). It participates in sulfur metabolism; hydrogen sulfide biosynthesis; hydrogen sulfide from sulfite (NADPH route): step 1/1. Its function is as follows. Component of the sulfite reductase complex that catalyzes the 6-electron reduction of sulfite to sulfide. This is one of several activities required for the biosynthesis of L-cysteine from sulfate. The chain is Sulfite reductase [NADPH] hemoprotein beta-component from Dickeya chrysanthemi (strain Ech1591) (Dickeya zeae (strain Ech1591)).